The primary structure comprises 529 residues: Type I inositol polyphosphate 5-phosphatase 5 (529 aa).

Catalytic stretches follow at residues 371–386 (DRVLWLGDLNYRVALT) and 451–466 (KRRTPAWCDRILWKGE).

It belongs to the inositol polyphosphate 5-phosphatase family.

Functionally, may be involved in the regulation of root hairs development. Required for restricting both the size of the root-hair initiation site and the width of the root hairs during the transition to tip growth, but is not required for normal subsequent tip growth. This Arabidopsis thaliana (Mouse-ear cress) protein is Type I inositol polyphosphate 5-phosphatase 5.